Reading from the N-terminus, the 100-residue chain is Small ribosomal subunit protein uS14c (100 aa).

The protein belongs to the universal ribosomal protein uS14 family. In terms of assembly, part of the 30S ribosomal subunit.

It is found in the plastid. Its subcellular location is the chloroplast. In terms of biological role, binds 16S rRNA, required for the assembly of 30S particles. The sequence is that of Small ribosomal subunit protein uS14c from Emiliania huxleyi (Coccolithophore).